A 113-amino-acid chain; its full sequence is Large ribosomal subunit protein uL22 (113 aa).

It belongs to the universal ribosomal protein uL22 family. As to quaternary structure, part of the 50S ribosomal subunit.

In terms of biological role, this protein binds specifically to 23S rRNA; its binding is stimulated by other ribosomal proteins, e.g. L4, L17, and L20. It is important during the early stages of 50S assembly. It makes multiple contacts with different domains of the 23S rRNA in the assembled 50S subunit and ribosome. Functionally, the globular domain of the protein is located near the polypeptide exit tunnel on the outside of the subunit, while an extended beta-hairpin is found that lines the wall of the exit tunnel in the center of the 70S ribosome. The polypeptide is Large ribosomal subunit protein uL22 (Desulforudis audaxviator (strain MP104C)).